A 165-amino-acid chain; its full sequence is Deoxyuridine 5'-triphosphate nucleotidohydrolase (165 aa).

The protein belongs to the dUTPase family. In terms of assembly, homotrimer. Mg(2+) serves as cofactor.

Its subcellular location is the host cytoplasm. It is found in the virion. The enzyme catalyses dUTP + H2O = dUMP + diphosphate + H(+). Functionally, the viral dUTPase may play a role in lowering the dUTP concentration in natural infections to minimize misincorporation of deoxyuridine into the viral DNA and ensure the fidelity of genome replication. This is Deoxyuridine 5'-triphosphate nucleotidohydrolase from Ornithodoros (relapsing fever ticks).